A 469-amino-acid chain; its full sequence is 3-isopropylmalate dehydratase large subunit (469 aa).

[4Fe-4S] cluster contacts are provided by Cys346, Cys406, and Cys409.

The protein belongs to the aconitase/IPM isomerase family. LeuC type 1 subfamily. In terms of assembly, heterodimer of LeuC and LeuD. [4Fe-4S] cluster serves as cofactor.

The catalysed reaction is (2R,3S)-3-isopropylmalate = (2S)-2-isopropylmalate. The protein operates within amino-acid biosynthesis; L-leucine biosynthesis; L-leucine from 3-methyl-2-oxobutanoate: step 2/4. Its function is as follows. Catalyzes the isomerization between 2-isopropylmalate and 3-isopropylmalate, via the formation of 2-isopropylmaleate. The sequence is that of 3-isopropylmalate dehydratase large subunit from Lysinibacillus sphaericus (strain C3-41).